We begin with the raw amino-acid sequence, 382 residues long: Bifunctional enzyme IspD/IspF (382 aa).

Residues 1–226 (MTLAVLIVAA…RSTMDNIPDI (226 aa)) form a 2-C-methyl-D-erythritol 4-phosphate cytidylyltransferase region. Residues 227-382 (RLGNGYDVHR…ALATATLVRA (156 aa)) form a 2-C-methyl-D-erythritol 2,4-cyclodiphosphate synthase region. A divalent metal cation contacts are provided by D233 and H235. 4-CDP-2-C-methyl-D-erythritol 2-phosphate is bound by residues 233–235 (DVH) and 259–260 (HS). H267 provides a ligand contact to a divalent metal cation. Residues 281-283 (DIG), 357-360 (TTSE), F364, and R367 each bind 4-CDP-2-C-methyl-D-erythritol 2-phosphate.

The protein in the N-terminal section; belongs to the IspD/TarI cytidylyltransferase family. IspD subfamily. It in the C-terminal section; belongs to the IspF family. The cofactor is a divalent metal cation.

The catalysed reaction is 2-C-methyl-D-erythritol 4-phosphate + CTP + H(+) = 4-CDP-2-C-methyl-D-erythritol + diphosphate. It carries out the reaction 4-CDP-2-C-methyl-D-erythritol 2-phosphate = 2-C-methyl-D-erythritol 2,4-cyclic diphosphate + CMP. It functions in the pathway isoprenoid biosynthesis; isopentenyl diphosphate biosynthesis via DXP pathway; isopentenyl diphosphate from 1-deoxy-D-xylulose 5-phosphate: step 2/6. It participates in isoprenoid biosynthesis; isopentenyl diphosphate biosynthesis via DXP pathway; isopentenyl diphosphate from 1-deoxy-D-xylulose 5-phosphate: step 4/6. In terms of biological role, bifunctional enzyme that catalyzes the formation of 4-diphosphocytidyl-2-C-methyl-D-erythritol from CTP and 2-C-methyl-D-erythritol 4-phosphate (MEP) (IspD), and catalyzes the conversion of 4-diphosphocytidyl-2-C-methyl-D-erythritol 2-phosphate (CDP-ME2P) to 2-C-methyl-D-erythritol 2,4-cyclodiphosphate (ME-CPP) with a corresponding release of cytidine 5-monophosphate (CMP) (IspF). This is Bifunctional enzyme IspD/IspF from Ruegeria sp. (strain TM1040) (Silicibacter sp.).